We begin with the raw amino-acid sequence, 586 residues long: CTP synthase 2 (586 aa).

The 255-residue stretch at 300-554 folds into the Glutamine amidotransferase type-1 domain; the sequence is SIALVGKYTK…LAATGNLNAY (255 aa). Residues Cys-399, His-526, and Glu-528 each act as for GATase activity in the active site. The interval 563–586 is disordered; sequence SSDRYSDASDDSFSEPRIAELEIS. Phosphoserine is present on residues Ser-568, Ser-571, and Ser-574.

The protein belongs to the CTP synthase family.

The catalysed reaction is UTP + L-glutamine + ATP + H2O = CTP + L-glutamate + ADP + phosphate + 2 H(+). It functions in the pathway pyrimidine metabolism; CTP biosynthesis via de novo pathway; CTP from UDP: step 2/2. Functionally, catalyzes the ATP-dependent amination of UTP to CTP with either L-glutamine or ammonia as the source of nitrogen. Constitutes the rate-limiting enzyme in the synthesis of cytosine nucleotides. The sequence is that of CTP synthase 2 (CTPS2) from Homo sapiens (Human).